The sequence spans 242 residues: MAESKVVVPESVLKKIKRQEEWALAKKDEAVAAKKKSVEARKLIFKRAEQYAKEYAEKDNELIRLKREAKLKGGFYVDPEAKLLFIIRIRGINAIDPKTKKILQLLRLRQIFNGVFLKVNKATVNMLRRVEPYVTYGYPNLKSVKELIYKRGYGKLNHQRIALTDNSIVDQALGKHGIICVEDLIHEIMTVGPHFKEANNFLWPFQLKAPLGGLKKKRNHYVEGGDAGNRENFINELVRRMN.

The protein belongs to the universal ribosomal protein uL30 family.

The protein is Large ribosomal subunit protein uL30x (RPL7C) of Arabidopsis thaliana (Mouse-ear cress).